Consider the following 312-residue polypeptide: 2,3-dihydroxyphenylpropionate/2,3-dihydroxicinnamic acid 1,2-dioxygenase (312 aa).

Catalysis depends on H115, which acts as the Proton donor. Catalysis depends on H179, which acts as the Proton acceptor.

This sequence belongs to the LigB/MhpB extradiol dioxygenase family. As to quaternary structure, homotetramer. The cofactor is Fe(2+).

It catalyses the reaction 3-(2,3-dihydroxyphenyl)propanoate + O2 = (2Z,4E)-2-hydroxy-6-oxonona-2,4-dienedioate + H(+). The enzyme catalyses (2E)-3-(2,3-dihydroxyphenyl)prop-2-enoate + O2 = (2Z,4E,7E)-2-hydroxy-6-oxonona-2,4,7-trienedioate + H(+). It participates in aromatic compound metabolism; 3-phenylpropanoate degradation. Functionally, catalyzes the non-heme iron(II)-dependent oxidative cleavage of 2,3-dihydroxyphenylpropionic acid and 2,3-dihydroxicinnamic acid into 2-hydroxy-6-ketononadienedioate and 2-hydroxy-6-ketononatrienedioate, respectively. The sequence is that of 2,3-dihydroxyphenylpropionate/2,3-dihydroxicinnamic acid 1,2-dioxygenase from Mycolicibacterium paratuberculosis (strain ATCC BAA-968 / K-10) (Mycobacterium paratuberculosis).